Consider the following 214-residue polypeptide: ATP-dependent Clp protease proteolytic subunit (214 aa).

Catalysis depends on serine 114, which acts as the Nucleophile. Histidine 139 is an active-site residue.

Belongs to the peptidase S14 family. Fourteen ClpP subunits assemble into 2 heptameric rings which stack back to back to give a disk-like structure with a central cavity, resembling the structure of eukaryotic proteasomes.

Its subcellular location is the cytoplasm. It catalyses the reaction Hydrolysis of proteins to small peptides in the presence of ATP and magnesium. alpha-casein is the usual test substrate. In the absence of ATP, only oligopeptides shorter than five residues are hydrolyzed (such as succinyl-Leu-Tyr-|-NHMec, and Leu-Tyr-Leu-|-Tyr-Trp, in which cleavage of the -Tyr-|-Leu- and -Tyr-|-Trp bonds also occurs).. Functionally, cleaves peptides in various proteins in a process that requires ATP hydrolysis. Has a chymotrypsin-like activity. Plays a major role in the degradation of misfolded proteins. In Nitrosomonas europaea (strain ATCC 19718 / CIP 103999 / KCTC 2705 / NBRC 14298), this protein is ATP-dependent Clp protease proteolytic subunit.